Reading from the N-terminus, the 288-residue chain is Bifunctional protein FolD (288 aa).

NADP(+) is bound by residues 166 to 168 (GAS) and Ile232.

Belongs to the tetrahydrofolate dehydrogenase/cyclohydrolase family. As to quaternary structure, homodimer.

The catalysed reaction is (6R)-5,10-methylene-5,6,7,8-tetrahydrofolate + NADP(+) = (6R)-5,10-methenyltetrahydrofolate + NADPH. It catalyses the reaction (6R)-5,10-methenyltetrahydrofolate + H2O = (6R)-10-formyltetrahydrofolate + H(+). It functions in the pathway one-carbon metabolism; tetrahydrofolate interconversion. Catalyzes the oxidation of 5,10-methylenetetrahydrofolate to 5,10-methenyltetrahydrofolate and then the hydrolysis of 5,10-methenyltetrahydrofolate to 10-formyltetrahydrofolate. The chain is Bifunctional protein FolD from Escherichia coli O139:H28 (strain E24377A / ETEC).